A 608-amino-acid polypeptide reads, in one-letter code: Isoprene synthase, chloroplastic (608 aa).

The N-terminal 45 residues, 1–45 (MATNLLCLSNKLSSPTPTPSTRFPQSKNFITQKTSLANPKPWRVI), are a transit peptide targeting the chloroplast. Asp-350 serves as a coordination point for dimethylallyl diphosphate. Residues Asp-350 and Asp-354 each contribute to the Mg(2+) site. The DDXXD motif motif lies at 350-354 (DDVYD). 3 residues coordinate dimethylallyl diphosphate: Glu-428, Arg-494, and Asn-497. Mg(2+) is bound by residues Asn-497, Thr-501, and Glu-505.

This sequence belongs to the terpene synthase family. Tpsb subfamily. Mg(2+) is required as a cofactor. Mn(2+) serves as cofactor.

It localises to the plastid. The protein localises to the chloroplast. The catalysed reaction is dimethylallyl diphosphate = isoprene + diphosphate. Lyase that catalyzes the formation of isoprene from dimethylallyl diphosphate. The protein is Isoprene synthase, chloroplastic (ISPS) of Pueraria montana var. lobata (Kudzu vine).